A 252-amino-acid polypeptide reads, in one-letter code: Isoprenyl transferase (252 aa).

The active site involves Asp32. Residue Asp32 coordinates Mg(2+). Residues 33-36 (GNGR), Trp37, Arg45, His49, and 77-79 (STE) contribute to the substrate site. The active-site Proton acceptor is the Asn80. Substrate-binding positions include Trp81, Arg83, Arg200, and 206-208 (RLS). Glu219 serves as a coordination point for Mg(2+).

It belongs to the UPP synthase family. Homodimer. The cofactor is Mg(2+).

In terms of biological role, catalyzes the condensation of isopentenyl diphosphate (IPP) with allylic pyrophosphates generating different type of terpenoids. This Listeria innocua serovar 6a (strain ATCC BAA-680 / CLIP 11262) protein is Isoprenyl transferase.